The primary structure comprises 256 residues: Thiazole synthase (256 aa).

The Schiff-base intermediate with DXP role is filled by Lys95. 1-deoxy-D-xylulose 5-phosphate contacts are provided by residues Gly156, 182–183 (AG), and 204–205 (NT).

Belongs to the ThiG family. In terms of assembly, homotetramer. Forms heterodimers with either ThiH or ThiS.

Its subcellular location is the cytoplasm. It catalyses the reaction [ThiS sulfur-carrier protein]-C-terminal-Gly-aminoethanethioate + 2-iminoacetate + 1-deoxy-D-xylulose 5-phosphate = [ThiS sulfur-carrier protein]-C-terminal Gly-Gly + 2-[(2R,5Z)-2-carboxy-4-methylthiazol-5(2H)-ylidene]ethyl phosphate + 2 H2O + H(+). It functions in the pathway cofactor biosynthesis; thiamine diphosphate biosynthesis. In terms of biological role, catalyzes the rearrangement of 1-deoxy-D-xylulose 5-phosphate (DXP) to produce the thiazole phosphate moiety of thiamine. Sulfur is provided by the thiocarboxylate moiety of the carrier protein ThiS. In vitro, sulfur can be provided by H(2)S. The sequence is that of Thiazole synthase from Escherichia coli O157:H7.